The chain runs to 2169 residues: Voltage-dependent L-type calcium channel subunit alpha-1C (2169 aa).

Over 1–154 (MIRAFAQPST…RACISIVEWK (154 aa)) the chain is Cytoplasmic. The segment at 77–98 (GAALSWLAAIDAARQAKLMGSA) is calmodulin-binding. Residues 104–128 (STVSSTQRKRQQYGKPKKQGGTTAT) form a disordered region. The segment covering 110–121 (QRKRQQYGKPKK) has biased composition (basic residues). The stretch at 141-438 (NPIRRACISI…LVLGVLSGEF (298 aa)) is one I repeat. A helical membrane pass occupies residues 155–173 (PFEIIILLTIFANCVALAI). The Extracellular segment spans residues 174–188 (YIPFPEDDSNATNSN). The N-linked (GlcNAc...) asparagine glycan is linked to N183. A helical membrane pass occupies residues 189-209 (LERVEYLFLIIFTVEAFLKVI). The Cytoplasmic segment spans residues 210–218 (AYGLLFHPN). The chain crosses the membrane as a helical span at residues 219-239 (AYLRNGWNLLDFIIVVVGLFS). The Extracellular segment spans residues 240-262 (AILEQATKADGANALGGKGAGFD). A helical membrane pass occupies residues 263–281 (VKALRAFRVLRPLRLVSGV). The Cytoplasmic segment spans residues 282–298 (PSLQVVLNSIIKAMVPL). A helical membrane pass occupies residues 299–320 (LHIALLVLFVIIIYAIIGLELF). The Extracellular portion of the chain corresponds to 321-380 (MGKMHKTCYNQEGIIDVPAEEDPSPCALETGHGRQCQNGTVCKPGWDGPKHGITNFDNFA). Cystine bridges form between C328–C356 and C346–C362. A glycan (N-linked (GlcNAc...) asparagine) is linked at N358. The pore-forming intramembrane region spans 381–402 (FAMLTVFQCITMEGWTDVLYWM). The short motif at 391-394 (TMEG) is the Selectivity filter of repeat I element. E393 provides a ligand contact to Ca(2+). Topologically, residues 403–410 (QDAMGYEL) are extracellular. The chain crosses the membrane as a helical span at residues 411-431 (PWVYFVSLVIFGSFFVLNLVL). Over 432–554 (GVLSGEFSKE…RKCRAAVKSN (123 aa)) the chain is Cytoplasmic. Residues 458–475 (QQLEEDLKGYLDWITQAE) form an AID/alpha-interaction domain; mediates interaction with the beta subunit region. Positions 479 to 511 (PENEDEGMDEDKPRNMSMPTSETESVNTENVAG) are disordered. The span at 495 to 508 (SMPTSETESVNTEN) shows a compositional bias: polar residues. A Phosphoserine modification is found at S499. Phosphothreonine is present on T506. One copy of the II repeat lies at 540 to 786 (NRFCRRKCRA…LFLAIAVDNL (247 aa)). A helical transmembrane segment spans residues 555–573 (VFYWLVIFLVFLNTLTIAS). Residues 574-584 (EHYNQPHWLTE) lie on the Extracellular side of the membrane. Residues 585 to 605 (VQDTANKALLALFTAEMLLKM) form a helical membrane-spanning segment. Residues 606-616 (YSLGLQAYFVS) lie on the Cytoplasmic side of the membrane. Residues 617 to 636 (LFNRFDCFIVCGGILETILV) form a helical membrane-spanning segment. Topologically, residues 637-645 (ETKIMSPLG) are extracellular. The chain crosses the membrane as a helical span at residues 646–664 (ISCWRCVRLLRIFKITRYW). Residues 665-683 (NSLSNLVASLLNSLRSIAS) are Cytoplasmic-facing. The helical transmembrane segment at 684-703 (LLLLLFLFIIIFSLLGMQLF) threads the bilayer. Over 704–723 (GGKFNFDEMQTRRSTFDNFP) the chain is Extracellular. Residues 724 to 745 (QSLLTVFQILTGEDWNSVMYDG) constitute an intramembrane region (pore-forming). A Selectivity filter of repeat II motif is present at residues 734-737 (TGED). E736 is a binding site for Ca(2+). Over 746–755 (IMAYGGPSFP) the chain is Extracellular. The chain crosses the membrane as a helical span at residues 756-775 (GMLVCIYFIILFISPNYILL). The Cytoplasmic segment spans residues 776-930 (NLFLAIAVDN…LQCHRIVNDT (155 aa)). The disordered stretch occupies residues 794 to 891 (SAQKEEEEEK…EMPVGPRPRP (98 aa)). The span at 813 to 836 (SPEKKQEVMEKPAVEESKEEKIEL) shows a compositional bias: basic and acidic residues. A phosphoserine mark is found at S838 and S845. Positions 859 to 906 (SENEDKSPHSNPDTAGEEDEEEPEMPVGPRPRPLSELHLKEKAVPMPE) are interaction with STAC2. Residues 873–882 (AGEEDEEEPE) show a composition bias toward acidic residues. One copy of the III repeat lies at 917 to 1198 (NRFRLQCHRI…IFVGFVIVTF (282 aa)). Residues 931-949 (IFTNLILFFILLSSISLAA) traverse the membrane as a helical segment. Over 950–961 (EDPVQHTSFRNH) the chain is Extracellular. A helical membrane pass occupies residues 962–981 (ILFYFDIVFTTIFTIEIALK). The Cytoplasmic portion of the chain corresponds to 982-997 (MTAYGAFLHKGSFCRN). Residues 998–1016 (YFNILDLLVVSVSLISFGI) traverse the membrane as a helical segment. The Extracellular portion of the chain corresponds to 1017 to 1023 (QSSAINV). A helical membrane pass occupies residues 1024–1041 (VKILRVLRVLRPLRINRA). The Cytoplasmic segment spans residues 1042–1060 (KGLKHVVQCVFVAIRTIGN). A helical transmembrane segment spans residues 1061–1080 (IVIVTTLLQFMFACIGVQLF). At 1081–1130 (KGKLYTCSDSSKQTEAESKGNYITYKTGEVDHPIIQPRSWENSKFDFDNV) the chain is on the extracellular side. Residues 1118 to 1207 (RSWENSKFDF…FQEQGEQEYK (90 aa)) are dihydropyridine binding. The pore-forming intramembrane region spans 1131 to 1151 (LAAMMALFTVSTFEGWPELLY). The Selectivity filter of repeat III signature appears at 1142 to 1145 (TFEG). Residue E1144 coordinates Ca(2+). The Extracellular portion of the chain corresponds to 1152-1168 (RSIDSHTEDKGPIYNYR). The chain crosses the membrane as a helical span at residues 1169 to 1190 (VEISIFFIIYIIIIAFFMMNIF). The Cytoplasmic segment spans residues 1191–1248 (VGFVIVTFQEQGEQEYKNCELDKNQRQCVEYALKARPLPRYIPKNQHQYKVWYVVNST). The stretch at 1235–1508 (NQHQYKVWYV…LFVAVIMDNF (274 aa)) is one IV repeat. Residues 1249–1270 (YFEYLMFVLILLNTICLAMQHY) traverse the membrane as a helical segment. Residues 1271-1278 (GQSCLFKI) are Extracellular-facing. Residues 1279–1300 (AMNILNMLFTGLFTVEMILKLI) traverse the membrane as a helical segment. Over 1301–1310 (AFKPKHYFCD) the chain is Cytoplasmic. The chain crosses the membrane as a helical span at residues 1311–1330 (AWNTFDALIVVGSIVDIAIT). At 1331–1353 (EVHPAEHTQCSPSMSAEENSRIS) the chain is on the extracellular side. A helical transmembrane segment spans residues 1354-1372 (ITFFRLFRVMRLVKLLSRG). The Cytoplasmic segment spans residues 1373–1390 (EGIRTLLWTFIKSFQALP). A helical transmembrane segment spans residues 1391 to 1411 (YVALLIVMLFFIYAVIGMQVF). The Extracellular segment spans residues 1412–1433 (GKIALNDTTEINRNNNFQTFPQ). A glycan (N-linked (GlcNAc...) asparagine) is linked at N1417. The pore-forming intramembrane region spans 1434–1452 (AVLLLFRCATGEAWQDIML). Residues 1443-1446 (TGEA) carry the Selectivity filter of repeat IV motif. At 1453-1480 (ACMPGKKCAPESEPSNSTEGETPCGSSF) the chain is on the extracellular side. Residues 1459–1527 (KCAPESEPSN…LGPHHLDEFK (69 aa)) are dihydropyridine binding. An intrachain disulfide couples C1460 to C1476. Residue N1468 is glycosylated (N-linked (GlcNAc...) asparagine). The segment at 1473 to 1515 (ETPCGSSFAVFYFISFYMLCAFLIINLFVAVIMDNFDYLTRDW) is phenylalkylamine binding. The chain crosses the membrane as a helical span at residues 1481–1505 (AVFYFISFYMLCAFLIINLFVAVIM). Residues 1506-2169 (DNFDYLTRDW…PDSRSYVSNL (664 aa)) are Cytoplasmic-facing. The interval 1640–1667 (DEVTVGKFYATFLIQEYFRKFKKRKEQG) is important for interaction with STAC1, STAC2 and STAC3. Positions 1640–1673 (DEVTVGKFYATFLIQEYFRKFKKRKEQGLVGKPS) are calmodulin-binding. Positions 1646-1666 (KFYATFLIQEYFRKFKKRKEQ) are calmodulin-binding IQ region. Residues 1680–1699 (LQAGLRTLHDIGPEIRRAIS) are important for localization in at the junctional membrane. 2 positions are modified to phosphoserine: S1699 and S1720. 2 stretches are compositionally biased toward polar residues: residues 1761-1770 (KTGNNQADTE) and 1780-1792 (STFT…STGS). Positions 1761 to 1793 (KTGNNQADTESPSHEKLVDSTFTPSSYSSTGSN) are disordered. Residue S1927 is modified to Phosphoserine; by PKA. A disordered region spans residues 1970 to 1998 (RSHSPSTFPRPRPTPPVTPGSRGRPLQPI). Pro residues predominate over residues 1977-1987 (FPRPRPTPPVT).

Belongs to the calcium channel alpha-1 subunit (TC 1.A.1.11) family. CACNA1C subfamily. As to quaternary structure, component of a calcium channel complex consisting of a pore-forming alpha subunit (CACNA1C) and ancillary beta, gamma and delta subunits. The channel complex contains alpha, beta, gamma and delta subunits in a 1:1:1:1 ratio, i.e. it contains only one of each type of subunit. CACNA1C channel activity is modulated by ancillary subunits, such as CACNB1, CACNB2, CACNB3, CACNA2D1 and CACNA2D4. Interacts with the gamma subunits CACNG4, CACNG6, CACNG7 and CACNG8. Interacts with CACNB1. Interacts with CACNB2. Identified in a complex with CACNA2D4 and CACNB3. Interacts with CACNB3. Interacts with CACNA2D1. Interacts with CACNA2D4. Interacts with CALM1. Interacts (via the N-terminus and the C-terminal C and IQ motifs) with CABP1; this inhibits Ca(2+)-dependent channel inactivation. The binding via the C motif is calcium independent whereas the binding via IQ requires the presence of calcium and is mutually exclusive with calmodulin binding. The binding to the cytoplasmic N-terminal domain is calcium independent but is essential for the channel modulation. Interacts (via C-terminal CDB motif) with CABP5; in a calcium-dependent manner. Interacts with CIB1; the interaction increases upon cardiomyocytes hypertrophy. Interacts with STAC2 and STAC3; this inhibits channel inactivation. Post-translationally, phosphorylation by PKA at Ser-1927 activates the channel. Elevated levels of blood glucose lead to increased phosphorylation by PKA. Is also phosphorylated in vitro by CaM-kinase II, PKC and CGPK. In terms of tissue distribution, detected in hippocampus and brain cortex, on neuronal cell bodies and dendrites, and in post-synaptic density in brain (at protein level). Isoforms 4 and 5 are expressed throughout the central nervous system, with highest levels in the olfactory bulb and cerebellum. Also expressed in heart, pituitary, adrenal gland, liver, kidney, and in a much lesser extent in testes and spleen.

The protein resides in the cell membrane. Its subcellular location is the sarcolemma. The protein localises to the perikaryon. It is found in the postsynaptic density membrane. It localises to the cell projection. The protein resides in the dendrite. Its subcellular location is the T-tubule. The enzyme catalyses Ca(2+)(in) = Ca(2+)(out). Inhibited by dihydropyridines (DHP), such as isradipine. Inhibited by nifedipine. Channel activity is regulated by Ca(2+) and calmodulin. Binding of STAC1, STAC2 or STAC3 to a region that overlaps with the calmodulin binding site inhibits channel inactivation by Ca(2+) and calmodulin. Binding of calmodulin or CABP1 at the same regulatory sites results in opposite effects on the channel function. Shear stress and pressure increases calcium channel activity. In terms of biological role, pore-forming, alpha-1C subunit of the voltage-gated calcium channel that gives rise to L-type calcium currents. Mediates influx of calcium ions into the cytoplasm, and thereby triggers calcium release from the sarcoplasm. Plays an important role in excitation-contraction coupling in the heart. Required for normal heart development and normal regulation of heart rhythm. Required for normal contraction of smooth muscle cells in blood vessels and in the intestine. Essential for normal blood pressure regulation via its role in the contraction of arterial smooth muscle cells. Long-lasting (L-type) calcium channels belong to the 'high-voltage activated' (HVA) group. In Rattus norvegicus (Rat), this protein is Voltage-dependent L-type calcium channel subunit alpha-1C (Cacna1c).